The primary structure comprises 346 residues: uncharacterized protein (346 aa).

The tract at residues 322-346 is disordered; the sequence is GRDGGYRETTSPPTGRGRNVRGSHA.

This is an uncharacterized protein from Mycobacterium tuberculosis (strain CDC 1551 / Oshkosh).